The primary structure comprises 467 residues: ATP synthase subunit beta, sodium ion specific (467 aa).

151-158 is a binding site for ATP; that stretch reads GGAGVGKT.

Belongs to the ATPase alpha/beta chains family. F-type ATPases have 2 components, CF(1) - the catalytic core - and CF(0) - the membrane proton channel. CF(1) has five subunits: alpha(3), beta(3), gamma(1), delta(1), epsilon(1). CF(0) has three main subunits: a, b and c.

Its subcellular location is the cell membrane. The catalysed reaction is 4 Na(+)(in) + ATP + H2O = 4 Na(+)(out) + ADP + phosphate + H(+). Its function is as follows. Produces ATP from ADP in the presence of a sodium ion gradient across the membrane. The beta chain is the catalytic subunit. This chain is ATP synthase subunit beta, sodium ion specific, found in Propionigenium modestum.